The following is a 412-amino-acid chain: Nucleoside transporter 1 (412 aa).

The interval 1–21 is disordered; sequence MSKIKESSSGILGASNNTNKE. The Cytoplasmic portion of the chain corresponds to 1–29; it reads MSKIKESSSGILGASNNTNKESSQKSARS. Over residues 7–21 the composition is skewed to polar residues; the sequence is SSSGILGASNNTNKE. Residues 30–50 traverse the membrane as a helical segment; that stretch reads IALPMTYALIGVSCLNVWNSA. The Extracellular segment spans residues 51 to 56; the sequence is LGLNIK. A helical membrane pass occupies residues 57-77; it reads ITYNIFQMAGLLTSSVLALFV. The Cytoplasmic portion of the chain corresponds to 78–81; that stretch reads NYPR. Residues 82–102 traverse the membrane as a helical segment; the sequence is VLLPTSLGVLTLLCAGFQIAH. At 103-114 the chain is on the extracellular side; it reads QTFSDSAFDTYC. The chain crosses the membrane as a helical span at residues 115–135; that stretch reads LAAFITIGLMAGIAQTIAFAI. At 136–144 the chain is on the cytoplasmic side; that stretch reads GTTKESNMS. The helical transmembrane segment at 145 to 165 threads the bilayer; sequence GYISAGIGMSGVLIFCINLIL. Topologically, residues 166–181 are extracellular; it reads DYIVSDEKIYEINKSK. A helical transmembrane segment spans residues 182–202; the sequence is LLCLFSISEIFLIITIVCCVL. The Cytoplasmic portion of the chain corresponds to 203-240; sequence YIDLFPKNDNNKDSTDIEKAEEKEGRLPLIEIIKDGYK. Residues 241–261 form a helical membrane-spanning segment; the sequence is AILSIFLVNWLSLQLFPGIGH. The Extracellular portion of the chain corresponds to 262 to 271; the sequence is KKWQEKHGMT. A helical membrane pass occupies residues 272–294; it reads DNNVTIIVGMFQVFDFISRYPPN. Residues 295-310 lie on the Cytoplasmic side of the membrane; it reads FTHIKIFKYFTFSLNT. The chain crosses the membrane as a helical span at residues 311–331; sequence LLIGNFLRLLFIPWFVLNAVI. The Extracellular portion of the chain corresponds to 332-343; it reads SSSFFTNIVQQC. Residues 344–364 form a helical membrane-spanning segment; it reads VCIAALAFTNGWFNTVPFIVF. Residues 365 to 382 lie on the Cytoplasmic side of the membrane; the sequence is VKELKKVKHQKDIETISR. The helical transmembrane segment at 383–403 threads the bilayer; it reads IMVVSLFFGLFFGMLTTCLYD. The Extracellular portion of the chain corresponds to 404–412; that stretch reads YFPIGILNN.

This sequence belongs to the SLC29A/ENT transporter (TC 2.A.57) family.

It is found in the cell membrane. It catalyses the reaction inosine(in) = inosine(out). It carries out the reaction adenosine(in) = adenosine(out). The catalysed reaction is hypoxanthine(out) = hypoxanthine(in). The enzyme catalyses guanosine(in) = guanosine(out). It catalyses the reaction guanine(out) = guanine(in). It carries out the reaction thymidine(in) = thymidine(out). The catalysed reaction is uridine(out) = uridine(in). The enzyme catalyses uracil(in) = uracil(out). It catalyses the reaction thymine(out) = thymine(in). It carries out the reaction adenine(out) = adenine(in). The catalysed reaction is cytosine(out) = cytosine(in). The enzyme catalyses xanthine(out) = xanthine(in). In terms of biological role, nucleoside and nucleobase transporter with a broad substrate specificity. The chain is Nucleoside transporter 1 from Plasmodium berghei (strain Anka).